The chain runs to 436 residues: Adenylosuccinate synthetase (436 aa).

Residues Gly-13–Lys-19 and Gly-41–Thr-43 contribute to the GTP site. Asp-14 (proton acceptor) is an active-site residue. Residues Asp-14 and Gly-41 each contribute to the Mg(2+) site. Residues Asp-14–Lys-17, Asn-39–His-42, Thr-131, Arg-145, Gln-226, Thr-241, and Arg-309 each bind IMP. Catalysis depends on His-42, which acts as the Proton donor. Thr-305–Arg-311 lines the substrate pocket. GTP is bound by residues Arg-311, Lys-337–Asp-339, and Ser-419–Gly-421.

This sequence belongs to the adenylosuccinate synthetase family. Homodimer. The cofactor is Mg(2+).

The protein localises to the cytoplasm. It catalyses the reaction IMP + L-aspartate + GTP = N(6)-(1,2-dicarboxyethyl)-AMP + GDP + phosphate + 2 H(+). It functions in the pathway purine metabolism; AMP biosynthesis via de novo pathway; AMP from IMP: step 1/2. In terms of biological role, plays an important role in the de novo pathway of purine nucleotide biosynthesis. Catalyzes the first committed step in the biosynthesis of AMP from IMP. In Aromatoleum aromaticum (strain DSM 19018 / LMG 30748 / EbN1) (Azoarcus sp. (strain EbN1)), this protein is Adenylosuccinate synthetase.